A 169-amino-acid chain; its full sequence is Procalin (169 aa).

Positions 1–18 (MKTFIVITFIGILSYAYA) are cleaved as a signal peptide. 3 disulfide bridges follow: Cys-21–Cys-125, Cys-54–Cys-168, and Cys-83–Cys-97.

The protein belongs to the calycin superfamily. Triabin family. Expressed in salivary glands.

Its subcellular location is the secreted. The polypeptide is Procalin (Hospesneotomae protracta (Western bloodsucking conenose)).